The primary structure comprises 677 residues: WD repeat-containing protein 43 (677 aa).

6 WD repeats span residues 11–51, 57–119, 124–163, 166–205, 207–259, and 267–309; these read PLAP…LHQE, HLSG…LHSK, GHDN…VKCK, GDNS…RHFT, HATP…KEKS, and TDEP…YCKK. Ser77 bears the Phosphoserine mark. A Glycyl lysine isopeptide (Lys-Gly) (interchain with G-Cter in SUMO1); alternate cross-link involves residue Lys309. Residue Lys309 forms a Glycyl lysine isopeptide (Lys-Gly) (interchain with G-Cter in SUMO2); alternate linkage. Thr321 is subject to Phosphothreonine. A Glycyl lysine isopeptide (Lys-Gly) (interchain with G-Cter in SUMO1); alternate cross-link involves residue Lys384. Residue Lys384 forms a Glycyl lysine isopeptide (Lys-Gly) (interchain with G-Cter in SUMO2); alternate linkage. Thr394 bears the Phosphothreonine mark. Ser399, Ser431, Ser437, and Ser590 each carry phosphoserine. 2 disordered regions span residues 414–445 and 582–677; these read AIKP…LGAM and SEKT…SEEE. Positions 582-592 are enriched in polar residues; that stretch reads SEKTKGATSPG. A compositionally biased stretch (acidic residues) spans 600 to 652; that stretch reads EEESSEEESDDEIADKDSEDNWDEDEEESESEKDEDVEEEDEDAEGKDEENGE. Residues 653-663 show a composition bias toward basic and acidic residues; it reads DRDTASEKELN. Thr656 bears the Phosphothreonine mark. Ser658 is modified (phosphoserine). Over residues 664–677 the composition is skewed to acidic residues; it reads GDSDLDPENESEEE.

The protein belongs to the UTP5 family. Part of the small subunit (SSU) processome, composed of more than 70 proteins and the RNA chaperone small nucleolar RNA (snoRNA) U3. May be a component of the proposed t-UTP subcomplex of the ribosomal small subunit (SSU) processome containing at least UTP4, WDR43, HEATR1, UTP15, WDR75. Binds to RNA; binding is required for its chromatin association. Interacts with CDK9, DDX21 and SUPT6H. Interacts with RNA polymerase II. Interacts directly with UTP4 and UTP15.

The protein localises to the nucleus. It is found in the nucleolus. The protein resides in the nucleolus fibrillar center. Its subcellular location is the nucleoplasm. In terms of biological role, ribosome biogenesis factor that coordinates hyperactive transcription and ribogenesis. Part of the small subunit (SSU) processome, first precursor of the small eukaryotic ribosomal subunit. During the assembly of the SSU processome in the nucleolus, many ribosome biogenesis factors, an RNA chaperone and ribosomal proteins associate with the nascent pre-rRNA and work in concert to generate RNA folding, modifications, rearrangements and cleavage as well as targeted degradation of pre-ribosomal RNA by the RNA exosome. Involved in nucleolar processing of pre-18S ribosomal RNA. Required for optimal pre-ribosomal RNA transcription by RNA polymerase I. Essential for stem cell pluripotency and embryonic development. In the nucleoplasm, recruited by promoter-associated/nascent transcripts and transcription to active promoters where it facilitates releases of elongation factor P-TEFb and paused RNA polymerase II to allow transcription elongation and maintain high-level expression of its targets genes. The protein is WD repeat-containing protein 43 of Homo sapiens (Human).